The primary structure comprises 197 residues: UPF0228 protein MA_3125 (197 aa).

Belongs to the UPF0228 family.

The sequence is that of UPF0228 protein MA_3125 from Methanosarcina acetivorans (strain ATCC 35395 / DSM 2834 / JCM 12185 / C2A).